A 653-amino-acid chain; its full sequence is Hepatocyte growth factor activator serine protease (653 aa).

Residues 1 to 34 (MGRQAWISSLCPLPRPCPFLLLLLLLVVPRGAQP) form the signal peptide. The tract at residues 34-98 (PQAGRNHTEP…SSSPPGGQVL (65 aa)) is disordered. A propeptide spans 35 to 369 (QAGRNHTEPP…RLTACESLAR (335 aa)) (removed in mature form). 3 N-linked (GlcNAc...) asparagine glycosylation sites follow: Asn-39, Asn-47, and Asn-63. Residues 47 to 59 (NVTATPVTPTIPV) are compositionally biased toward low complexity. One can recognise a Fibronectin type-II domain in the interval 100–147 (ESGQPCRFPFRYGGRMLHSCTSEGSAYRKWCATTHNYDRDRAWGYCAE). 19 disulfides stabilise this stretch: Cys-105/Cys-130, Cys-119/Cys-145, Cys-161/Cys-172, Cys-166/Cys-183, Cys-185/Cys-194, Cys-199/Cys-227, Cys-225/Cys-234, Cys-242/Cys-253, Cys-247/Cys-264, Cys-266/Cys-275, Cys-283/Cys-364, Cys-304/Cys-346, Cys-335/Cys-359, Cys-392/Cys-519, Cys-430/Cys-446, Cys-438/Cys-508, Cys-533/Cys-602, Cys-565/Cys-581, and Cys-592/Cys-620. The EGF-like 1 domain maps to 157 to 195 (ILDPCASGPCLNGGTCSSTHDHGSYHCSCPLAFTGKDCG). A Fibronectin type-I domain is found at 197 to 237 (EKCFDETRYEYFEVGDHWARVSEGHVEQCGCMEGQARCEDT). Positions 238-276 (HHTACLSSPCLNGGTCHLIVGTGTSVCTCPLGYAGRFCN) constitute an EGF-like 2 domain. The Kringle domain maps to 283 to 364 (CFLGNGTEYR…SWEYCRLTAC (82 aa)). An N-linked (GlcNAc...) asparagine glycan is attached at Asn-287. The Peptidase S1 domain maps to 406–644 (IIGGSSSLPG…YVDWINDRIR (239 aa)). The active-site Charge relay system is His-445. N-linked (GlcNAc...) asparagine glycosylation is present at Asn-466. The active-site Charge relay system is Asp-495. The N-linked (GlcNAc...) asparagine glycan is linked to Asn-544. Residue Ser-596 is the Charge relay system of the active site.

This sequence belongs to the peptidase S1 family. As to quaternary structure, heterodimer of a short chain and a long chain linked by a disulfide bond. The active form of HGFAC presents in the serum is derived from the COOH-terminal region of the precursor by the cleavage of bonds between Arg-369 and Val-370 and Arg-405 and Ile-406.

It is found in the secreted. Its function is as follows. Serine protease that hydrolyzes the inactive zymogen hepatocyte growth factor (HGFsc) to an activated disulfide-linked heterodimer, then initiating hepatocyte growth factor receptor signaling pathway. The polypeptide is Hepatocyte growth factor activator serine protease (Mus musculus (Mouse)).